Here is a 440-residue protein sequence, read N- to C-terminus: Probable cytosolic iron-sulfur protein assembly protein 1 (440 aa).

WD repeat units follow at residues 12–51 (AHAE…SSDG), 71–110 (DHKR…SDDE), 148–187 (GHES…DFEC), 193–233 (EHSQ…WCIF), 278–317 (EEDE…PDSA), 326–379 (AHSR…SPSS), and 401–440 (HGVN…VVRD). Acidic residues predominate over residues 107-116 (SDDEEEEDEG). The segment at 107 to 137 (SDDEEEEDEGAQGVYKPAGVDSDGDGDGGKE) is disordered.

It belongs to the WD repeat CIA1 family.

Its function is as follows. Essential component of the cytosolic iron-sulfur (Fe/S) protein assembly machinery. Required for the maturation of extramitochondrial Fe/S proteins. The polypeptide is Probable cytosolic iron-sulfur protein assembly protein 1 (Cryptococcus neoformans var. neoformans serotype D (strain B-3501A) (Filobasidiella neoformans)).